A 104-amino-acid chain; its full sequence is Small ribosomal subunit protein uS10 (104 aa).

This sequence belongs to the universal ribosomal protein uS10 family. As to quaternary structure, part of the 30S ribosomal subunit.

Its function is as follows. Involved in the binding of tRNA to the ribosomes. The protein is Small ribosomal subunit protein uS10 of Albidiferax ferrireducens (strain ATCC BAA-621 / DSM 15236 / T118) (Rhodoferax ferrireducens).